The chain runs to 337 residues: tRNA-cytidine(32) 2-sulfurtransferase (337 aa).

A PP-loop motif motif is present at residues 71–76 (SGGKDS). 3 residues coordinate [4Fe-4S] cluster: cysteine 146, cysteine 149, and cysteine 237.

Belongs to the TtcA family. In terms of assembly, homodimer. Requires Mg(2+) as cofactor. [4Fe-4S] cluster is required as a cofactor.

The protein resides in the cytoplasm. The enzyme catalyses cytidine(32) in tRNA + S-sulfanyl-L-cysteinyl-[cysteine desulfurase] + AH2 + ATP = 2-thiocytidine(32) in tRNA + L-cysteinyl-[cysteine desulfurase] + A + AMP + diphosphate + H(+). It functions in the pathway tRNA modification. Its function is as follows. Catalyzes the ATP-dependent 2-thiolation of cytidine in position 32 of tRNA, to form 2-thiocytidine (s(2)C32). The sulfur atoms are provided by the cysteine/cysteine desulfurase (IscS) system. The polypeptide is tRNA-cytidine(32) 2-sulfurtransferase (Burkholderia vietnamiensis (strain G4 / LMG 22486) (Burkholderia cepacia (strain R1808))).